The primary structure comprises 452 residues: Phosphatidylinositol N-acetylglucosaminyltransferase GPI3 subunit (452 aa).

A helical transmembrane segment spans residues 407 to 427 (LYLLCGIVEYMLFFLLEWLYP).

Belongs to the glycosyltransferase group 1 family. As to quaternary structure, component of the phosphatidylinositol N-acetylglucosaminyltransferase complex composed of at least GPI1, GPI2, GPI3, GPI15, GPI19 and ERI1.

It localises to the endoplasmic reticulum membrane. It carries out the reaction a 1,2-diacyl-sn-glycero-3-phospho-(1D-myo-inositol) + UDP-N-acetyl-alpha-D-glucosamine = a 6-(N-acetyl-alpha-D-glucosaminyl)-1-(1,2-diacyl-sn-glycero-3-phospho)-1D-myo-inositol + UDP + H(+). It participates in glycolipid biosynthesis; glycosylphosphatidylinositol-anchor biosynthesis. Inhibited by Ras, probably via the interaction between RAS2 and ERI1. Functionally, catalytic subunit in the complex catalyzing the transfer of N-acetylglucosamine from UDP-N-acetylglucosamine to phosphatidylinositol, the first step of GPI biosynthesis. In Saccharomyces cerevisiae (strain RM11-1a) (Baker's yeast), this protein is Phosphatidylinositol N-acetylglucosaminyltransferase GPI3 subunit (SPT14).